Consider the following 364-residue polypeptide: tRNA 2-selenouridine synthase (364 aa).

In terms of domain architecture, Rhodanese spans 14–137 (LIADTPIIDV…LRQTAIQATI (124 aa)). C97 acts as the S-selanylcysteine intermediate in catalysis.

The protein belongs to the SelU family. In terms of assembly, monomer.

It catalyses the reaction 5-methylaminomethyl-2-thiouridine(34) in tRNA + selenophosphate + (2E)-geranyl diphosphate + H2O + H(+) = 5-methylaminomethyl-2-selenouridine(34) in tRNA + (2E)-thiogeraniol + phosphate + diphosphate. It carries out the reaction 5-methylaminomethyl-2-thiouridine(34) in tRNA + (2E)-geranyl diphosphate = 5-methylaminomethyl-S-(2E)-geranyl-thiouridine(34) in tRNA + diphosphate. The enzyme catalyses 5-methylaminomethyl-S-(2E)-geranyl-thiouridine(34) in tRNA + selenophosphate + H(+) = 5-methylaminomethyl-2-(Se-phospho)selenouridine(34) in tRNA + (2E)-thiogeraniol. The catalysed reaction is 5-methylaminomethyl-2-(Se-phospho)selenouridine(34) in tRNA + H2O = 5-methylaminomethyl-2-selenouridine(34) in tRNA + phosphate. Its function is as follows. Involved in the post-transcriptional modification of the uridine at the wobble position (U34) of tRNA(Lys), tRNA(Glu) and tRNA(Gln). Catalyzes the conversion of 2-thiouridine (S2U-RNA) to 2-selenouridine (Se2U-RNA). Acts in a two-step process involving geranylation of 2-thiouridine (S2U) to S-geranyl-2-thiouridine (geS2U) and subsequent selenation of the latter derivative to 2-selenouridine (Se2U) in the tRNA chain. The polypeptide is tRNA 2-selenouridine synthase (Escherichia coli (strain SMS-3-5 / SECEC)).